Here is a 633-residue protein sequence, read N- to C-terminus: ATP-dependent zinc metalloprotease FtsH (633 aa).

The Cytoplasmic segment spans residues 1–19; sequence MTPSNEPGKQDQIPQPGPT. Residues 20–40 form a helical membrane-spanning segment; sequence IPNQYSFLWLSAAIFLMFLWL. At 41–133 the chain is on the periplasmic side; sequence QGNNQQQQQE…SRSGRPWWQE (93 aa). The chain crosses the membrane as a helical span at residues 134 to 154; it reads LILGFLPWILLLALMFWFWGA. Residues 155–633 are Cytoplasmic-facing; it reads AQKRMTQGGG…LEEARSRETA (479 aa). 226–233 contacts ATP; it reads GPPGTGKT. Residue His447 coordinates Zn(2+). The active site involves Glu448. His451 and Asp523 together coordinate Zn(2+).

The protein in the central section; belongs to the AAA ATPase family. It in the C-terminal section; belongs to the peptidase M41 family. As to quaternary structure, homohexamer. It depends on Zn(2+) as a cofactor.

It localises to the cell inner membrane. Its function is as follows. Acts as a processive, ATP-dependent zinc metallopeptidase for both cytoplasmic and membrane proteins. Plays a role in the quality control of integral membrane proteins. This is ATP-dependent zinc metalloprotease FtsH from Marinobacter nauticus (strain ATCC 700491 / DSM 11845 / VT8) (Marinobacter aquaeolei).